The primary structure comprises 593 residues: MSESLTRIAIVSEDKCRPKKCRQECRRSCPVVRTGKLCIEVNPTDRIAFISETLCIGCGICVKKCPFGAINIINLPTNLESEVTHRYSANSFKLHRLPTPRPGQVLGLVGTNGIGKSTALKILSGKMKPNLGRYDNPPDWAEVVKYFRGSELQNFFTKVVEDNIKALIKPQYVDHIPRAIKTGDKTVSGLIKARANNNNFEEVMDHTDLQNLLNREVGHLSGGELQRFAIAAVATQKADVYMFDEPSSYLDIKQRLKAGRVIRSLLATTNYVIVVEHDLSVLDYLSDFVCVLYGVPSMYGVVTLPYSVREGINIFLDGHIPTENLRFRSEALTFRLADASDEITADRTAEYNYPDHVIEQGDFKLTIKSGGFSDAEIIVLLGENGTGKTTFCKWMAKNSDLKISMKPQTIAPKFQGTVRMLFLKKIRAAFLNGKFQSEVCKPLSIDNIIDQEVLNLSGGELQRVAICLALGMPADVYLIDEPSAYLDSEQRIIASKVIRRFIVNSRKTAFIVEHDFIMATYLADRVILFEGQPSRDARCNPPQSLLTGMNTFLKNLDVTFRRDPNTLRPRINKFDSQMDQEQKNAGNYFFLEN.

4Fe-4S ferredoxin-type domains follow at residues 7–39 and 46–75; these read RIAI…KLCI and RIAF…IINL. 2 consecutive ABC transporter domains span residues 70 to 318 and 334 to 556; these read INII…FLDG and FRLA…LKNL. ATP contacts are provided by residues 110 to 117 and 382 to 389; these read GTNGIGKS and GENGTGKT.

The protein belongs to the ABC transporter superfamily. In terms of assembly, component of the multifactor complex (MFC). The complex associates with pre-initiation complexes.

It is found in the cytoplasm. The protein resides in the nucleus. In terms of biological role, component of the multifactor complex (MFC) involved in translation initiation. Required for the binding of MFC to the 40S ribosome. Required for the processing and nuclear export of the 60S and 40S ribosomal subunits. The sequence is that of Translation initiation factor rli1 (rli1) from Schizosaccharomyces pombe (strain 972 / ATCC 24843) (Fission yeast).